Here is a 164-residue protein sequence, read N- to C-terminus: Methanogen homoaconitase small subunit 2 (164 aa).

A YLRT motif is present at residues 26–29 (YLRT).

The protein belongs to the LeuD family. LeuD type 2 subfamily. As to quaternary structure, heterotetramer of 2 HacA and 2 HacB proteins. Cannot form a complex with LeuC.

It carries out the reaction (2R)-homocitrate = (2R,3S)-homoisocitrate. It catalyses the reaction (2R)-homocitrate = cis-homoaconitate + H2O. The enzyme catalyses (2R,3S)-homoisocitrate = cis-homoaconitate + H2O. The catalysed reaction is cis-(homo)2aconitate + H2O = (2R,3S)-iso(homo)2citrate. It carries out the reaction cis-(homo)3aconitate + H2O = (2R,3S)-iso(homo)3citrate. The protein operates within organic acid metabolism; 2-oxosuberate biosynthesis. Functionally, component of a hydro-lyase with broad substrate specificity for cis-unsaturated tricarboxylic acids. Catalyzes both the reversible dehydration of (R)-homocitrate ((R)-2-hydroxybutane-1,2,4-tricarboxylate) to produce cis-homoaconitate ((Z)-but-1-ene-1,2,4-tricarboxylate), and its hydration to homoisocitrate ((1R,2S)-1-hydroxybutane-1,2,4-tricarboxylate). Is also able to hydrate the analogous longer chain substrates cis-homo(2)-aconitate, cis-homo(3)-aconitate. These reactions are part of the biosynthesis pathway of coenzyme B. The chain is Methanogen homoaconitase small subunit 2 (hacB2) from Methanosarcina acetivorans (strain ATCC 35395 / DSM 2834 / JCM 12185 / C2A).